Reading from the N-terminus, the 679-residue chain is Stress-70 protein, mitochondrial (679 aa).

The transit peptide at 1–46 directs the protein to the mitochondrion; it reads MISASRAAVSRFVGTAASRGPTAARHQDGWNGLSHEAFRIVSRRDY. Positions 1-432 are interaction with NFS1; it reads MISASRAAVS…IQGGVLAGDV (432 aa). ADP contacts are provided by T63 and N64. Residues 63–431 form a nucleotide-binding domain (NBD) region; that stretch reads TNSCVAVMEG…AIQGGVLAGD (369 aa). K76 is modified (N6-acetyllysine). At T87 the chain carries Phosphothreonine. N6-acetyllysine; alternate occurs at positions 135 and 138. N6-succinyllysine; alternate occurs at positions 135 and 138. K143 carries the post-translational modification N6-acetyllysine. K206 carries the N6-acetyllysine; alternate modification. Residue K206 is modified to N6-succinyllysine; alternate. K206 is subject to N6-malonyllysine; alternate. 2 positions are modified to N6-acetyllysine: K234 and K288. K300 bears the N6-acetyllysine; alternate mark. K300 carries the post-translational modification N6-succinyllysine; alternate. ADP contacts are provided by E313, K316, and S320. N6-succinyllysine is present on K368. G388 and R391 together coordinate ADP. Position 394 is an N6-succinyllysine (K394). S408 carries the post-translational modification Phosphoserine. Positions 432–441 are interdomain linker; sequence VTDVLLLDVT. Positions 432 to 679 are interaction with FXN and ISCU; sequence VTDVLLLDVT…QKDNQKEEKQ (248 aa). The substrate-binding domain (SBD) stretch occupies residues 442–679; that stretch reads PLSLGIETLG…QKDNQKEEKQ (238 aa). R513 carries the omega-N-methylarginine modification. N6-acetyllysine; alternate occurs at positions 567 and 600. K567 and K600 each carry N6-succinyllysine; alternate. An N6-succinyllysine modification is found at K610. The residue at position 612 (K612) is an N6-acetyllysine. K646 carries the N6-acetyllysine; alternate modification. At K646 the chain carries N6-succinyllysine; alternate. The tract at residues 656–679 is disordered; that stretch reads ASEREGSGSSGTGEQKDNQKEEKQ. The segment covering 669 to 679 has biased composition (basic and acidic residues); it reads EQKDNQKEEKQ.

The protein belongs to the heat shock protein 70 family. Interacts strongly with the intermediate form of FXN and weakly with its mature form. Interacts with HSCB. Associates with the mitochondrial contact site and cristae organizing system (MICOS) complex, composed of at least MICOS10/MIC10, CHCHD3/MIC19, CHCHD6/MIC25, APOOL/MIC27, IMMT/MIC60, APOO/MIC23/MIC26 and QIL1/MIC13. This complex was also known under the names MINOS or MitOS complex. The MICOS complex associates with mitochondrial outer membrane proteins SAMM50, MTX1, MTX2 and DNAJC11, mitochondrial inner membrane protein TMEM11 and with HSPA9. Interacts with DNLZ, the interaction is required to prevent self-aggregation. Interacts with TESPA1. Interacts with PDPN. Interacts with NFU1, NFS1 and ISCU. Interacts with TP53; the interaction promotes TP53 degradation. Interacts (via SBD domain) with UBXN2A; the interaction with UBXN2A inhibits HSPA9/MOT-2 interaction with and degradation of TP53, thereby promotes TP53 translocation to the nucleus. Interacts with ITPR1 AND VDAC1; this interaction couples ITPR1 to VDAC1. Component of the TIM23 mitochondrial inner membrane pre-sequence translocase complex.

Its subcellular location is the mitochondrion. The protein localises to the nucleus. The protein resides in the nucleolus. It localises to the cytoplasm. It is found in the mitochondrion matrix. The catalysed reaction is ATP + H2O = ADP + phosphate + H(+). Its activity is regulated as follows. The chaperone activity is regulated by ATP-induced allosteric coupling of the nucleotide-binding (NBD) and substrate-binding (SBD) domains. ATP binding in the NBD leads to a conformational change in the NBD, which is transferred through the interdomain linker (IDL) to the substrate-binding domain (SBD). This elicits a reduced substrate affinity and a faster substrate exchange rate. Upon hydrolysis of ATP to ADP, the protein undergoes a conformational change that increases its affinity for substrate proteins. It cycles through repeated phases of ATP hydrolysis and nucleotide exchange, facilitating repeated cycles of substrate binding and release. Functions in collaboration with co-chaperones. Functions with the co-chaperone, DNLZ, to maintain solubility and regulate ATP hydrolysis. Nucleotide exchange factors, GRPEL1 and GRPEL2, accelerate nucleotide exchange. Its function is as follows. Mitochondrial chaperone that plays a key role in mitochondrial protein import, folding, and assembly. Plays an essential role in the protein quality control system, the correct folding of proteins, the re-folding of misfolded proteins, and the targeting of proteins for subsequent degradation. These processes are achieved through cycles of ATP binding, ATP hydrolysis, and ADP release, mediated by co-chaperones. In mitochondria, it associates with the TIM (translocase of the inner membrane) protein complex to assist in the import and folding of mitochondrial proteins. Plays an important role in mitochondrial iron-sulfur cluster (ISC) biogenesis, interacts with and stabilizes ISC cluster assembly proteins FXN, NFU1, NFS1 and ISCU. Regulates erythropoiesis via stabilization of ISC assembly. Regulates mitochondrial calcium-dependent apoptosis by coupling two calcium channels, ITPR1 and VDAC1, at the mitochondria-associated endoplasmic reticulum (ER) membrane to facilitate calcium transport from the ER lumen to the mitochondria intermembrane space, providing calcium for the downstream calcium channel MCU, which releases it into the mitochondrial matrix. Although primarily located in the mitochondria, it is also found in other cellular compartments. In the cytosol, it associates with proteins involved in signaling, apoptosis, or senescence. It may play a role in cell cycle regulation via its interaction with and promotion of degradation of TP53. May play a role in the control of cell proliferation and cellular aging. Protects against reactive oxygen species (ROS). Extracellular HSPA9 plays a cytoprotective role by preventing cell lysis following immune attack by the membrane attack complex by disrupting formation of the complex. The sequence is that of Stress-70 protein, mitochondrial from Bos taurus (Bovine).